A 129-amino-acid polypeptide reads, in one-letter code: Small ribosomal subunit protein uS11 (129 aa).

The protein belongs to the universal ribosomal protein uS11 family. In terms of assembly, part of the 30S ribosomal subunit. Interacts with proteins S7 and S18. Binds to IF-3.

Functionally, located on the platform of the 30S subunit, it bridges several disparate RNA helices of the 16S rRNA. Forms part of the Shine-Dalgarno cleft in the 70S ribosome. This is Small ribosomal subunit protein uS11 from Aeromonas hydrophila subsp. hydrophila (strain ATCC 7966 / DSM 30187 / BCRC 13018 / CCUG 14551 / JCM 1027 / KCTC 2358 / NCIMB 9240 / NCTC 8049).